The following is a 586-amino-acid chain: CTP synthase 2 (586 aa).

The Glutamine amidotransferase type-1 domain occupies 300–554; it reads SIALVGKYTK…LAATGNLNAY (255 aa). Catalysis depends on for GATase activity residues Cys399, His526, and Glu528. The segment at 564 to 586 is disordered; the sequence is SDRYSDASDDSFSEPRLAELEIS. 3 positions are modified to phosphoserine: Ser568, Ser571, and Ser574.

The protein belongs to the CTP synthase family.

The catalysed reaction is UTP + L-glutamine + ATP + H2O = CTP + L-glutamate + ADP + phosphate + 2 H(+). It functions in the pathway pyrimidine metabolism; CTP biosynthesis via de novo pathway; CTP from UDP: step 2/2. Functionally, catalyzes the ATP-dependent amination of UTP to CTP with either L-glutamine or ammonia as the source of nitrogen. Constitutes the rate-limiting enzyme in the synthesis of cytosine nucleotides. This Bos taurus (Bovine) protein is CTP synthase 2 (CTPS2).